A 325-amino-acid polypeptide reads, in one-letter code: Replication factor C small subunit (325 aa).

An ATP-binding site is contributed by 45–52 (GPPGTGKT).

Belongs to the activator 1 small subunits family. RfcS subfamily. Heteromultimer composed of small subunits (RfcS) and large subunits (RfcL).

Functionally, part of the RFC clamp loader complex which loads the PCNA sliding clamp onto DNA. This chain is Replication factor C small subunit, found in Sulfolobus acidocaldarius (strain ATCC 33909 / DSM 639 / JCM 8929 / NBRC 15157 / NCIMB 11770).